The chain runs to 219 residues: Ribose-5-phosphate isomerase A (219 aa).

Residues Thr28–Thr31, Asp81–Asp84, and Lys94–Gly97 each bind substrate. The active-site Proton acceptor is Glu103. Lys121 is a binding site for substrate.

The protein belongs to the ribose 5-phosphate isomerase family. In terms of assembly, homodimer.

The catalysed reaction is aldehydo-D-ribose 5-phosphate = D-ribulose 5-phosphate. The protein operates within carbohydrate degradation; pentose phosphate pathway; D-ribose 5-phosphate from D-ribulose 5-phosphate (non-oxidative stage): step 1/1. In terms of biological role, catalyzes the reversible conversion of ribose-5-phosphate to ribulose 5-phosphate. In Photobacterium profundum (strain SS9), this protein is Ribose-5-phosphate isomerase A.